A 175-amino-acid chain; its full sequence is Alpha-crystallin B chain (175 aa).

Residue methionine 1 is modified to N-acetylmethionine. Serine 19 bears the Phosphoserine mark. Residue serine 41 is glycosylated (O-linked (GlcNAc) serine). Serine 45 and serine 59 each carry phosphoserine. A sHSP domain is found at 56–164 (RAPSWIDTGL…PERTIPITRE (109 aa)). Histidine 83 serves as a coordination point for Zn(2+). Lysine 92 is subject to N6-acetyllysine. Residues histidine 104, glutamate 106, histidine 111, and histidine 119 each contribute to the Zn(2+) site. Positions 142-175 (VLTVNGPRKQASGPERTIPITREEKPAVTAAPKK) are disordered. Lysine 166 carries the N6-acetyllysine modification. Residue threonine 170 is glycosylated (O-linked (GlcNAc) threonine).

The protein belongs to the small heat shock protein (HSP20) family. In terms of assembly, heteromer composed of three CRYAA and one CRYAB subunits. Aggregates with homologous proteins, including the small heat shock protein HSPB1, to form large heteromeric complexes. Inter-subunit bridging via zinc ions enhances stability, which is crucial as there is no protein turn over in the lens. Interacts with HSPBAP1 and TTN/titin. Interacts with TMEM109; in the cellular response to DNA damage. Interacts with DES; binds rapidly during early stages of DES filament assembly and a reduced binding seen in the later stages. Interacts with ATP6V1A and with MTOR, forming a ternary complex. In terms of tissue distribution, lens as well as other tissues.

The protein localises to the cytoplasm. The protein resides in the nucleus. It localises to the secreted. Its subcellular location is the lysosome. May contribute to the transparency and refractive index of the lens. Has chaperone-like activity, preventing aggregation of various proteins under a wide range of stress conditions. In lens epithelial cells, stabilizes the ATP6V1A protein, preventing its degradation by the proteasome. In Spalax judaei (Judean Mountains blind mole rat), this protein is Alpha-crystallin B chain (CRYAB).